Consider the following 824-residue polypeptide: Translation initiation factor IF-2 (824 aa).

Disordered stretches follow at residues 1–32 and 45–232; these read MSDT…GRTK and VPKA…MGGQ. Residues 45 to 57 are compositionally biased toward low complexity; it reads VPKAGATTSAGGK. Residues 86-144 are compositionally biased toward basic and acidic residues; that stretch reads KAREAEEEAARIAEEKARAEERERRRAEQEERERAEREREESLKAKAEEDKRRKDEAEA. Over residues 145–167 the composition is skewed to low complexity; the sequence is AAKAAAAPAAEPVVQRPAAKAAP. Basic and acidic residues predominate over residues 170–193; that stretch reads APRKQQDRDRDNKRGGKGNDDSRR. Residues 321-489 form the tr-type G domain; that stretch reads TRPPVVTIMG…AIALQAEILE (169 aa). Residues 330–337 are G1; it reads GHVDHGKT. 330–337 is a GTP binding site; that stretch reads GHVDHGKT. The G2 stretch occupies residues 355-359; sequence GITQH. Residues 377 to 380 are G3; it reads DTPG. Residues 377–381 and 431–434 each bind GTP; these read DTPGH and NKID. The segment at 431–434 is G4; it reads NKID. A G5 region spans residues 467 to 469; that stretch reads SAI.

Belongs to the TRAFAC class translation factor GTPase superfamily. Classic translation factor GTPase family. IF-2 subfamily.

The protein localises to the cytoplasm. Its function is as follows. One of the essential components for the initiation of protein synthesis. Protects formylmethionyl-tRNA from spontaneous hydrolysis and promotes its binding to the 30S ribosomal subunits. Also involved in the hydrolysis of GTP during the formation of the 70S ribosomal complex. The polypeptide is Translation initiation factor IF-2 (Roseobacter denitrificans (strain ATCC 33942 / OCh 114) (Erythrobacter sp. (strain OCh 114))).